A 381-amino-acid chain; its full sequence is Cytochrome b (381 aa).

A run of 4 helical transmembrane segments spans residues 34 to 54 (FGSLLGLCLIIQILTGLFLAM), 78 to 99 (WLIRNIHANGASLFFICVYLHI), 114 to 134 (WNIGVILLFLLMATAFVGYVL), and 179 to 199 (FFAFHFLLPFLILALTVIHLL). Heme b-binding residues include His-84 and His-98. Heme b is bound by residues His-183 and His-197. A ubiquinone is bound at residue His-202. 4 consecutive transmembrane segments (helical) span residues 227–247 (YKDLLGFFVMIFLLATLALFT), 289–309 (LGGVLALLFSIFILMLVPLLH), 321–341 (LTQIFFWFLVANSIILTWIGG), and 348–368 (FIMVGQIASISYFSLFLIIMP).

Belongs to the cytochrome b family. The cytochrome bc1 complex contains 3 respiratory subunits (MT-CYB, CYC1 and UQCRFS1), 2 core proteins (UQCRC1 and UQCRC2) and probably 6 low-molecular weight proteins. Heme b is required as a cofactor.

It localises to the mitochondrion inner membrane. Its function is as follows. Component of the ubiquinol-cytochrome c reductase complex (complex III or cytochrome b-c1 complex) that is part of the mitochondrial respiratory chain. The b-c1 complex mediates electron transfer from ubiquinol to cytochrome c. Contributes to the generation of a proton gradient across the mitochondrial membrane that is then used for ATP synthesis. The chain is Cytochrome b (mt-cyb) from Negaprion brevirostris (Lemon shark).